We begin with the raw amino-acid sequence, 728 residues long: Beta-galactosidase 12 (728 aa).

Residues 1–27 (MGLNFREKAWILLGILCCSSLICSVKA) form the signal peptide. The active-site Proton donor is the Glu185. Residue Glu254 is the Nucleophile of the active site. N-linked (GlcNAc...) asparagine glycosylation is found at Asn255, Asn380, and Asn450.

The protein belongs to the glycosyl hydrolase 35 family. Ubiquitous, with higher expression levels in roots and siliques.

It localises to the secreted. Its subcellular location is the extracellular space. It is found in the apoplast. The enzyme catalyses Hydrolysis of terminal non-reducing beta-D-galactose residues in beta-D-galactosides.. This chain is Beta-galactosidase 12 (BGAL12), found in Arabidopsis thaliana (Mouse-ear cress).